The primary structure comprises 464 residues: PH domain-containing rcdII (464 aa).

Positions 8–210 form a coiled coil; it reads KSSKEIIEDL…NTKLMSNLEI (203 aa). 2 disordered regions span residues 215-290 and 317-347; these read NFNN…NSSG and CNNNNNNNNGNSKLSTGVPITRSRSSSSNSN. Composition is skewed to low complexity over residues 234 to 288, 317 to 328, and 338 to 347; these read STTT…SSNS, CNNNNNNNNGNS, and RSRSSSSNSN. Residues 353–461 form the PH domain; sequence KIVKEGWLKR…WKDTISSLMP (109 aa).

This Dictyostelium discoideum (Social amoeba) protein is PH domain-containing rcdII (rcdII).